The chain runs to 363 residues: Phospho-N-acetylmuramoyl-pentapeptide-transferase (363 aa).

The next 11 membrane-spanning stretches (helical) occupy residues 4–24 (NLLVSHINSCYIFSIFYNVIV), 28–48 (IAILLSFSISFSLIPILIKYF), 72–92 (TPTMGGIAIIFSIIISTLMLA), 96–116 (NIYVLTTIFGMLSLAILGLID), 129–149 (INATCKLISQIMVSIICCMIV), 169–189 (LTIDLSIFYIPFALFIIIGSS), 200–220 (GLVTVPIIIVSFCLGLMCYLA), 241–261 (ELTVLCSAIIGASLGFLWYNI), 266–286 (IFMGDVGSLSLGGAIGIISVI), 294–314 (GIIGGLFVIEALSAIIQIYSI), and 342–362 (IVSRFWLLSIIFSLIGLSSLI).

The protein belongs to the glycosyltransferase 4 family. MraY subfamily. Mg(2+) serves as cofactor.

Its subcellular location is the cell inner membrane. It catalyses the reaction UDP-N-acetyl-alpha-D-muramoyl-L-alanyl-gamma-D-glutamyl-meso-2,6-diaminopimeloyl-D-alanyl-D-alanine + di-trans,octa-cis-undecaprenyl phosphate = di-trans,octa-cis-undecaprenyl diphospho-N-acetyl-alpha-D-muramoyl-L-alanyl-D-glutamyl-meso-2,6-diaminopimeloyl-D-alanyl-D-alanine + UMP. It participates in cell wall biogenesis; peptidoglycan biosynthesis. Catalyzes the initial step of the lipid cycle reactions in the biosynthesis of the cell wall peptidoglycan: transfers peptidoglycan precursor phospho-MurNAc-pentapeptide from UDP-MurNAc-pentapeptide onto the lipid carrier undecaprenyl phosphate, yielding undecaprenyl-pyrophosphoryl-MurNAc-pentapeptide, known as lipid I. The chain is Phospho-N-acetylmuramoyl-pentapeptide-transferase from Orientia tsutsugamushi (strain Ikeda) (Rickettsia tsutsugamushi).